We begin with the raw amino-acid sequence, 442 residues long: Cyclic adenylate deaminase (442 aa).

It belongs to the metallo-dependent hydrolases superfamily. Adenosine and AMP deaminases family. The cofactor is Zn(2+).

It carries out the reaction 3',5'-cyclic AMP + H2O + H(+) = 3',5'-cyclic IMP + NH4(+). In terms of biological role, deaminates cAMP into cIMP, thereby repressing cAMP dependent metabolism or genes. In Leptospira interrogans serogroup Icterohaemorrhagiae serovar copenhageni (strain Fiocruz L1-130), this protein is Cyclic adenylate deaminase (add).